The sequence spans 99 residues: Prostate and testis expressed protein 4 (99 aa).

A signal peptide spans 1 to 23 (MNSVTKISTLLIVILSFLCFVEG). Positions 24–99 (LICNSCEKSR…CCEKNLCNSF (76 aa)) constitute a UPAR/Ly6 domain. 4 disulfides stabilise this stretch: Cys-26/Cys-52, Cys-29/Cys-37, Cys-44/Cys-70, and Cys-74/Cys-90.

In terms of tissue distribution, expressed in prostate, testis, eye, kidney and skeletal muscle. Expressed in the dorsal lobe of prostate. Not expressed in the ventral lobe of prostate.

The protein resides in the secreted. Its function is as follows. Enhances sperm motility. Binds to calmodulin and inhibits calcium transport into spermatozoa. May modulate the function of nicotinic acetylcholine receptors. This is Prostate and testis expressed protein 4 (Pate4) from Mus musculus (Mouse).